The following is a 172-amino-acid chain: Cyclin-L1 (172 aa).

The segment at 1 to 36 (MASGPHSTATAAAAASSAAPSAGGSSSGTTTTTTTT) is disordered. Residues 88–168 (ELIQAAGILL…LRGKSDQLHL (81 aa)) are cyclin-like.

It belongs to the cyclin family. Cyclin L subfamily. As to quaternary structure, interacts with POLR2A via its hyperphosphorylated C-terminal domain (CTD). Interacts with CDK11A, CDK11B, CDK12 and CDK13. May form a ternary complex with CDK11B and casein kinase II (CKII). Interacts with pre-mRNA-splicing factors, including at least SRSF1, SRSF2 and SRSF7/SLU7.

It localises to the nucleus speckle. Its subcellular location is the nucleus. The protein resides in the nucleoplasm. In terms of biological role, involved in pre-mRNA splicing. Functions in association with cyclin-dependent kinases (CDKs). May play a role in the regulation of RNA polymerase II (pol II). Inhibited by the CDK-specific inhibitor CDKN1A/p21. The chain is Cyclin-L1 (CCNL1) from Pongo abelii (Sumatran orangutan).